The primary structure comprises 143 residues: Nucleoside diphosphate kinase (143 aa).

Positions 11, 59, 87, 93, 104, and 114 each coordinate ATP. The Pros-phosphohistidine intermediate role is filled by H117.

It belongs to the NDK family. Homotetramer. The cofactor is Mg(2+).

The protein localises to the cytoplasm. The enzyme catalyses a 2'-deoxyribonucleoside 5'-diphosphate + ATP = a 2'-deoxyribonucleoside 5'-triphosphate + ADP. It catalyses the reaction a ribonucleoside 5'-diphosphate + ATP = a ribonucleoside 5'-triphosphate + ADP. In terms of biological role, major role in the synthesis of nucleoside triphosphates other than ATP. The ATP gamma phosphate is transferred to the NDP beta phosphate via a ping-pong mechanism, using a phosphorylated active-site intermediate. In Shewanella sp. (strain W3-18-1), this protein is Nucleoside diphosphate kinase.